A 625-amino-acid polypeptide reads, in one-letter code: Chaperone protein HtpG (625 aa).

The interval 1 to 332 is a; substrate-binding; the sequence is MSNKQNTAVQ…TEDLSLNVSR (332 aa). The interval 333–545 is b; the sequence is EIVQSSPVMS…KDAMDSQMER (213 aa). Positions 546 to 625 are c; it reads MMKMMQQEMP…ELIEAATLSR (80 aa).

Belongs to the heat shock protein 90 family. In terms of assembly, homodimer.

It localises to the cytoplasm. Functionally, molecular chaperone. Has ATPase activity. The sequence is that of Chaperone protein HtpG from Chlorobium luteolum (strain DSM 273 / BCRC 81028 / 2530) (Pelodictyon luteolum).